A 766-amino-acid polypeptide reads, in one-letter code: Discoidin domain-containing receptor A (766 aa).

The first 18 residues, 1-18 (MQIALVLLAIYGTTTTNT), serve as a signal peptide directing secretion. The Extracellular segment spans residues 19 to 372 (LRIDQCGENA…PPSSAATQQL (354 aa)). F5/8 type C domains are found at residues 24 to 180 (CGEN…IHGC) and 195 to 351 (SRLD…FTSA). A disulfide bond links C24 and C180. N-linked (GlcNAc...) asparagine glycosylation is found at N87, N103, N129, N242, N268, N311, and N353. A helical membrane pass occupies residues 373–393 (LVVCGIIFLTIFACVAYCVSV). Residues 394-766 (CLKRRQKNKS…FERLVKPFQD (373 aa)) are Cytoplasmic-facing. The disordered stretch occupies residues 475–501 (NFPPPPEGREEHTYSQPVSPENSSNGS). Positions 488-501 (YSQPVSPENSSNGS) are enriched in polar residues. The Protein kinase domain maps to 519–766 (LLIGKAIGEG…FERLVKPFQD (248 aa)). Residues 525–533 (IGEGKFTMI) and K547 contribute to the ATP site.

This sequence belongs to the protein kinase superfamily. Tyr protein kinase family. Insulin receptor subfamily. As to expression, expressed in neurons in head and tail, some motoneurons in ventral nerve cord, in PVP interneurons, pharynx and stomato-intestinal muscle.

It is found in the cell membrane. Its subcellular location is the cell projection. The protein resides in the axon. The protein localises to the perikaryon. Its function is as follows. Receptor which, together with svh-4, is involved in axon guidance to establish the tracts for the ventral and dorsal nerve cords during nervous system development. May play a role in axon regeneration following injury in D-type motor neurons. This Caenorhabditis elegans protein is Discoidin domain-containing receptor A.